Consider the following 178-residue polypeptide: MINWKEARSIKIPDGFKVSISGTTVTISYGGKTISKNFANNYVKLVEDGSTIKINASKNNSMVRGIVGTWASEINNMIKGLKDGFQYEMKIDYSHFPMRVSVKGKTVVIENFFGERSPRTAEIVGDTTVTVKGDRVYIAGISKKDVGETAANIERSTIIKGFDPRVFQDGIYLISKGE.

Belongs to the universal ribosomal protein uL6 family. Part of the 50S ribosomal subunit.

Its function is as follows. This protein binds to the 23S rRNA, and is important in its secondary structure. It is located near the subunit interface in the base of the L7/L12 stalk, and near the tRNA binding site of the peptidyltransferase center. The polypeptide is Large ribosomal subunit protein uL6 (Thermoplasma acidophilum (strain ATCC 25905 / DSM 1728 / JCM 9062 / NBRC 15155 / AMRC-C165)).